We begin with the raw amino-acid sequence, 282 residues long: Armadillo repeat-containing protein 1 (282 aa).

Methionine 1 is subject to N-acetylmethionine. An ARM repeat occupies 39 to 81 (GCLPGLILFMDHPNPPVVHSALLALRYLAECRANREKMKGELG). At threonine 137 the chain carries Phosphothreonine. A phosphoserine mark is found at serine 189, serine 246, serine 260, and serine 267. The tract at residues 239–261 (DYLPEDESPTKEQDKAVSRVGSH) is disordered. Over residues 246–255 (SPTKEQDKAV) the composition is skewed to basic and acidic residues.

In terms of assembly, interacts with mitochondrial contact site and cristae organizing system (MICOS) complex components IMMT/MIC60 and MICOS10/MIC10. Interacts with mitochondrial outer membrane sorting assembly machinery (SAM) complex components SAMM50 and MTX1.

It localises to the cytoplasm. It is found in the mitochondrion. The protein localises to the mitochondrion outer membrane. In association with mitochondrial contact site and cristae organizing system (MICOS) complex components and mitochondrial outer membrane sorting assembly machinery (SAM) complex components may regulate mitochondrial dynamics playing a role in determining mitochondrial length, distribution and motility. This is Armadillo repeat-containing protein 1 (ARMC1) from Bos taurus (Bovine).